We begin with the raw amino-acid sequence, 536 residues long: CTP synthase (536 aa).

An amidoligase domain region spans residues 1–267 (MSKFVFVTGG…CKETLRCLDL (267 aa)). S13 is a CTP binding site. S13 provides a ligand contact to UTP. Residues 14–19 (SIGKGI) and D71 each bind ATP. Mg(2+) contacts are provided by D71 and E141. CTP-binding positions include 148-150 (DIE), 188-193 (KTKPTQ), and K224. UTP-binding positions include 188 to 193 (KTKPTQ) and K224. Residues 292–534 (KVALVGKYIE…IKASREKLEQ (243 aa)) form the Glutamine amidotransferase type-1 domain. Position 354 (G354) interacts with L-glutamine. The Nucleophile; for glutamine hydrolysis role is filled by C381. Residues 382–385 (LGMQ), E405, and R462 each bind L-glutamine. Catalysis depends on residues H507 and E509.

Belongs to the CTP synthase family. As to quaternary structure, homotetramer.

The catalysed reaction is UTP + L-glutamine + ATP + H2O = CTP + L-glutamate + ADP + phosphate + 2 H(+). It carries out the reaction L-glutamine + H2O = L-glutamate + NH4(+). The enzyme catalyses UTP + NH4(+) + ATP = CTP + ADP + phosphate + 2 H(+). The protein operates within pyrimidine metabolism; CTP biosynthesis via de novo pathway; CTP from UDP: step 2/2. Its activity is regulated as follows. Allosterically activated by GTP, when glutamine is the substrate; GTP has no effect on the reaction when ammonia is the substrate. The allosteric effector GTP functions by stabilizing the protein conformation that binds the tetrahedral intermediate(s) formed during glutamine hydrolysis. Inhibited by the product CTP, via allosteric rather than competitive inhibition. In terms of biological role, catalyzes the ATP-dependent amination of UTP to CTP with either L-glutamine or ammonia as the source of nitrogen. Regulates intracellular CTP levels through interactions with the four ribonucleotide triphosphates. The polypeptide is CTP synthase (Prochlorococcus marinus (strain MIT 9515)).